The sequence spans 358 residues: MKRLVIMAAGTGGHIFPGLAIAETMKARGWQVSWLGTSHGMERELVPKAGVEMDIIEFSGLRGKGLQHTITGAFKLVASFATCFSILKRRNPGIVLGMGGYVTVPGGWMAKLRGVPVVLVNADAALLLSNKTLMPVAERVLFGFPADFGPAASKALVTGNPVRQEIISLPAPAERYAQHSGPLKVLVVGGSLGAKALNDAMPLALAMLPPEQRPVVTHQSGKKNIDALRANYAQAGVDAEVLDFINDMPRRYAEADLVICRAGAITVSELTAAGVASVLVPLLVSTTTHQRDNALWMEKQNAAIHLPQSELSAQGLAELLQGMTREKCKQMAEAAYANGRRDANAAIADVLEKLVKIT.

UDP-N-acetyl-alpha-D-glucosamine is bound by residues 11-13 (TGG), Arg-163, Ser-191, Ile-245, and Gln-290.

This sequence belongs to the glycosyltransferase 28 family. MurG subfamily.

The protein resides in the cell inner membrane. The catalysed reaction is di-trans,octa-cis-undecaprenyl diphospho-N-acetyl-alpha-D-muramoyl-L-alanyl-D-glutamyl-meso-2,6-diaminopimeloyl-D-alanyl-D-alanine + UDP-N-acetyl-alpha-D-glucosamine = di-trans,octa-cis-undecaprenyl diphospho-[N-acetyl-alpha-D-glucosaminyl-(1-&gt;4)]-N-acetyl-alpha-D-muramoyl-L-alanyl-D-glutamyl-meso-2,6-diaminopimeloyl-D-alanyl-D-alanine + UDP + H(+). It functions in the pathway cell wall biogenesis; peptidoglycan biosynthesis. Cell wall formation. Catalyzes the transfer of a GlcNAc subunit on undecaprenyl-pyrophosphoryl-MurNAc-pentapeptide (lipid intermediate I) to form undecaprenyl-pyrophosphoryl-MurNAc-(pentapeptide)GlcNAc (lipid intermediate II). The chain is UDP-N-acetylglucosamine--N-acetylmuramyl-(pentapeptide) pyrophosphoryl-undecaprenol N-acetylglucosamine transferase from Janthinobacterium sp. (strain Marseille) (Minibacterium massiliensis).